The following is a 101-amino-acid chain: DNA-binding protein Fis (101 aa).

Residues Q77–K96 constitute a DNA-binding region (H-T-H motif).

It belongs to the transcriptional regulatory Fis family. As to quaternary structure, homodimer.

Functionally, activates ribosomal RNA transcription. Plays a direct role in upstream activation of rRNA promoters. The protein is DNA-binding protein Fis of Shewanella frigidimarina (strain NCIMB 400).